The chain runs to 142 residues: Hemoglobin subunit alpha (142 aa).

Ser-1 carries the post-translational modification N-acetylserine. The Globin domain occupies 1–142 (SLSDKDKAAV…VALALAERYR (142 aa)). Position 59 (His-59) interacts with O2. Residue His-88 participates in heme b binding.

The protein belongs to the globin family. Hb1 is a heterotetramer of two alpha chains and two beta chains. HbC is a heterotetramer of two alpha chains and two beta-C chains. Red blood cells.

Its function is as follows. Involved in oxygen transport from gills to the various peripheral tissues. This is Hemoglobin subunit alpha (hba) from Trematomus bernacchii (Emerald rockcod).